The primary structure comprises 145 residues: Photosystem I reaction center subunit XI (145 aa).

The next 3 membrane-spanning stretches (helical) occupy residues 48–68 (LEIG…LGPL), 75–95 (LLVG…GLTI), and 125–145 (IGAF…SFFA).

The protein belongs to the PsaL family.

It localises to the plastid. It is found in the chloroplast thylakoid membrane. The chain is Photosystem I reaction center subunit XI from Emiliania huxleyi (Coccolithophore).